The sequence spans 606 residues: MIKAPILQSLLASRDDLTHNPEVNNFGGKEQECLYLLKRCHNIDEFKQVHARFIKLSLFYSSSFSASSVLAKCAHSGWENSMNYAASIFRGIDDPCTFDFNTMIRGYVNVMSFEEALCFYNEMMQRGNEPDNFTYPCLLKACTRLKSIREGKQIHGQVFKLGLEADVFVQNSLINMYGRCGEMELSSAVFEKLESKTAASWSSMVSARAGMGMWSECLLLFRGMCSETNLKAEESGMVSALLACANTGALNLGMSIHGFLLRNISELNIIVQTSLVDMYVKCGCLDKALHIFQKMEKRNNLTYSAMISGLALHGEGESALRMFSKMIKEGLEPDHVVYVSVLNACSHSGLVKEGRRVFAEMLKEGKVEPTAEHYGCLVDLLGRAGLLEEALETIQSIPIEKNDVIWRTFLSQCRVRQNIELGQIAAQELLKLSSHNPGDYLLISNLYSQGQMWDDVARTRTEIAIKGLKQTPGFSIVELKGKTHRFVSQDRSHPKCKEIYKMLHQMEWQLKFEGYSPDLTQILLNVDEEEKKERLKGHSQKVAIAFGLLYTPPGSIIKIARNLRMCSDCHTYTKKISMIYEREIVVRDRNRFHLFKGGTCSCKDYW.

PPR repeat units lie at residues 96-130 (CTFDFNTMIRGYVNVMSFEEALCFYNEMMQRGNEP), 131-165 (DNFTYPCLLKACTRLKSIREGKQIHGQVFKLGLEA), 166-200 (DVFVQNSLINMYGRCGEMELSSAVFEKLESKTAAS), 201-227 (WSSMVSARAGMGMWSECLLLFRGMCSE), 233-263 (EESGMVSALLACANTGALNLGMSIHGFLLRN), 268-298 (NIIVQTSLVDMYVKCGCLDKALHIFQKMEKR), 299-333 (NNLTYSAMISGLALHGEGESALRMFSKMIKEGLEP), 334-368 (DHVVYVSVLNACSHSGLVKEGRRVFAEMLKEGKVE), and 370-404 (TAEHYGCLVDLLGRAGLLEEALETIQSIPIEKNDV). A type E motif region spans residues 405–480 (IWRTFLSQCR…TPGFSIVELK (76 aa)). Positions 481 to 511 (GKTHRFVSQDRSHPKCKEIYKMLHQMEWQLK) are type E(+) motif. A type DYW motif region spans residues 512–606 (FEGYSPDLTQ…GGTCSCKDYW (95 aa)).

This sequence belongs to the PPR family. PCMP-H subfamily.

The chain is Pentatricopeptide repeat-containing protein At1g31920 (PCMP-H11) from Arabidopsis thaliana (Mouse-ear cress).